The following is a 176-amino-acid chain: MDPPDSASRVFSSRILSMVNADDVSAIILAQKNMLDRFEKTNEMLLNFNNLSSARLQQMNERFLHHTRTLVEMKRDLDSIFRRIRTLKGKLARQHPEAFSHIPEASLLEDEDEDPIPPSTTTTIATSEQSTGSCDTSPDTVSPSLSPGFEDLSHIRPGSPAINGRSHTDDEEMPGE.

An N-acetylmethionine modification is found at Met-1. The tract at residues 95 to 176 (HPEAFSHIPE…HTDDEEMPGE (82 aa)) is disordered. Positions 119–131 (STTTTIATSEQST) are enriched in low complexity. Residues 132 to 145 (GSCDTSPDTVSPSL) are compositionally biased toward polar residues.

Belongs to the KXD1 family. As to quaternary structure, component of the BLOC-one-related complex (BORC) which is composed of BLOC1S1, BLOC1S2, BORCS5, BORCS6, BORCS7, BORCS8, KXD1 and SNAPIN. Associates with the BLOC-1 complex. Interacts with BLOC1S1. Interacts with DTNBP1/BLOC1S7 (via coiled-coil domain).

The protein localises to the lysosome membrane. Functionally, as part of the BORC complex may play a role in lysosomes movement and localization at the cell periphery. Associated with the cytosolic face of lysosomes, the BORC complex may recruit ARL8B and couple lysosomes to microtubule plus-end-directed kinesin motor. May also be involved in the biogenesis of lysosome-related organelles such as melanosomes. The protein is KxDL motif-containing protein 1 (KXD1) of Bos taurus (Bovine).